The following is a 428-amino-acid chain: Polyadenylate-binding protein RBP47 (428 aa).

RRM domains follow at residues 84-164, 177-256, and 295-367; these read KTIW…WAGF, FSIF…VATP, and TTIF…WGRS.

It belongs to the polyadenylate-binding RBP47 family. Interacts with the poly(A) tail of mRNA in nucleus. Constitutively expressed in leaves, roots, and stems.

The protein resides in the nucleus. It is found in the cytoplasmic granule. Heterogeneous nuclear ribonucleoprotein (hnRNP)-protein binding the poly(A) tail of mRNA and probably involved in some steps of pre-mRNA maturation. The sequence is that of Polyadenylate-binding protein RBP47 (RBP47) from Nicotiana plumbaginifolia (Leadwort-leaved tobacco).